Reading from the N-terminus, the 101-residue chain is Large ribosomal subunit protein bL27 (101 aa).

Residues Met1–Leu21 form a disordered region.

Belongs to the bacterial ribosomal protein bL27 family.

This is Large ribosomal subunit protein bL27 from Buchnera aphidicola subsp. Cinara cedri (strain Cc).